A 490-amino-acid polypeptide reads, in one-letter code: GTPase Der (490 aa).

EngA-type G domains lie at 3–166 (PVVA…MEDL) and 203–376 (IKLA…DSST). Residues 9 to 16 (GRPNVGKS), 56 to 60 (DTGGI), 118 to 121 (NKTD), 209 to 216 (GRPNVGKS), 256 to 260 (DTAGV), and 321 to 324 (NKWD) each bind GTP. The region spanning 377 to 461 (RRVGTSMLTR…PIRIQFKEGE (85 aa)) is the KH-like domain.

The protein belongs to the TRAFAC class TrmE-Era-EngA-EngB-Septin-like GTPase superfamily. EngA (Der) GTPase family. In terms of assembly, associates with the 50S ribosomal subunit.

Functionally, GTPase that plays an essential role in the late steps of ribosome biogenesis. The sequence is that of GTPase Der from Escherichia coli O127:H6 (strain E2348/69 / EPEC).